The sequence spans 345 residues: MSVADLKNNIHKLDTGYGLMSLTWRAEPIPQSQAFEAMHRVVELSRERGHKAFFNVGEFYGPDFINLSYVHDFFAKYPDLRKDVVISCKGGADNATLTPRGSHDDVVQSVKNSVSAIGGYIDIFEVARIDTSLCTKGEVYPYESFEALAEMISEGVIGGISLSEVNEEQIRAIHKDWGKFLTCVEVELSLFSNDILHNGIAKTCAELGLSIICYSPLGRGLLTGQLKSNADIPEGDFRKSLKRFSDESLKKNLTLVRFLQEEIVDKRPQNNSITLAQLALGWVKHWNKVPEYSGAKFIPIPSGSSISKVNENFDEQKTKLTDQEFNAINKYLTTFHTVGDRYEMA.

The Proton donor role is filled by Tyr-60.

This sequence belongs to the aldo/keto reductase family.

The protein localises to the cytoplasm. It localises to the nucleus. The enzyme catalyses pyridoxine + NADP(+) = pyridoxal + NADPH + H(+). It functions in the pathway cofactor degradation; B6 vitamer degradation; pyridoxal from pyridoxine (dehydrogenase route): step 1/1. Its function is as follows. Catalyzes the reduction of pyridoxal (PL) with NADPH and oxidation of pyridoxine (PN) with NADP(+). The polypeptide is Putative pyridoxal reductase (Saccharomyces cerevisiae (strain ATCC 204508 / S288c) (Baker's yeast)).